A 61-amino-acid polypeptide reads, in one-letter code: Large ribosomal subunit protein bL32 (61 aa).

The tract at residues 1–22 (MAVPKQKSSKSRGRKRRTHQKV) is disordered. A compositionally biased stretch (basic residues) spans 7–20 (KSSKSRGRKRRTHQ).

This sequence belongs to the bacterial ribosomal protein bL32 family.

This Desulforapulum autotrophicum (strain ATCC 43914 / DSM 3382 / VKM B-1955 / HRM2) (Desulfobacterium autotrophicum) protein is Large ribosomal subunit protein bL32.